A 436-amino-acid polypeptide reads, in one-letter code: 3-ketoacyl-CoA thiolase (436 aa).

The active-site Acyl-thioester intermediate is Cys99. Active-site proton acceptor residues include His392 and Cys422.

Belongs to the thiolase-like superfamily. Thiolase family. In terms of assembly, heterotetramer of two alpha chains (FadJ) and two beta chains (FadI).

The protein resides in the cytoplasm. The catalysed reaction is an acyl-CoA + acetyl-CoA = a 3-oxoacyl-CoA + CoA. It functions in the pathway lipid metabolism; fatty acid beta-oxidation. Catalyzes the final step of fatty acid oxidation in which acetyl-CoA is released and the CoA ester of a fatty acid two carbons shorter is formed. The chain is 3-ketoacyl-CoA thiolase from Shewanella halifaxensis (strain HAW-EB4).